We begin with the raw amino-acid sequence, 656 residues long: MTVRPTLRPKPGSIPTDPGVYRFRDEHGRVIYVGKAKNLRARLSSYFQDFSALHPRTQTMISTAADVDWTVVNTEVEALQLEYSWIKEYSPRFNVRYRDDKSYPYLAVTLNEEFPRVQVMRGARRRGVRYFGPYSYAWAIRDTVDLLLRVFPVRTCSAGVFKRARSSGRPCLLGYIDKCSAPCVGRIGVEEYRALAEDFCAFMAGETGRFLRQLEAEMKQAAAAQEYERAARIRDDIQALRTVMEKQAVVLGDSTDCDVIAIAEDQLEAAVQVFYVRGGRIRGERGWVVDKVEDVSTGKLVEQFLAQTYGGADDEESTTAIPREVLVSAEPADRDAVVAWLSKRRGAAVDVRVPQRGDKRALMETVLKNAEQTLARHKSQRASDLTTRSKALAEIAEALGLAEAPLRIECFDISTLQGEHTVASMVVFEDGLARKSEYRRFSIRGAEGADSDVAAMYEVISRRFTRYLEESQRVGELDTLGESGAPQGAERKAPRFAYPPNLVVVDGGRPQVAAAQRALDDLGIEDVAVCGLAKRLEEVWLPGEEDPIILPRTSEGLYLLQRVRDEAHRFAISYHRRKRAKALTASVLDDIPGLGPVRRAALLKHFGSVRRLAQATAAEIAEVPGIGERTAQTIYERLTSVEGGQRTQPENSKADE.

Residues 16-95 (TDPGVYRFRD…IKEYSPRFNV (80 aa)) enclose the GIY-YIG domain. Positions 208-243 (GRFLRQLEAEMKQAAAAQEYERAARIRDDIQALRTV) constitute a UVR domain.

Belongs to the UvrC family. In terms of assembly, interacts with UvrB in an incision complex.

It localises to the cytoplasm. Its function is as follows. The UvrABC repair system catalyzes the recognition and processing of DNA lesions. UvrC both incises the 5' and 3' sides of the lesion. The N-terminal half is responsible for the 3' incision and the C-terminal half is responsible for the 5' incision. The polypeptide is UvrABC system protein C (Thermobifida fusca (strain YX)).